Here is a 256-residue protein sequence, read N- to C-terminus: MAHLGSRRRMSPGLRTRIAHRKAHRTPPSPLIAEPDEMMGKAHELFQLCDKEDKGLITKRDLQRLQNELPLTPEQLEAVFDSLDQSNNGYLTPVEFSMGLGKLLGVNLSHEEEKENSMMEETFESGWSDGPDEEDDAEEMLFSATMEHLGASRIFQEHKEIRDLWSRLRKERPELLSHFEEFLYRVSSYIRDVHHEKDTLEQALKRKETDHGREVRCLYEEMEQQIKIERERLLKKVLIKGDHGLKNYSHLIMSKV.

Residues 1-10 are compositionally biased toward basic residues; the sequence is MAHLGSRRRM. Residues 1 to 32 form a disordered region; the sequence is MAHLGSRRRMSPGLRTRIAHRKAHRTPPSPLI. EF-hand domains follow at residues 41–69 and 71–106; these read KAHELFQLCDKEDKGLITKRDLQRLQNEL and LTPEQLEAVFDSLDQSNNGYLTPVEFSMGLGKLLGV. Residues Asp-84, Ser-86, Asn-88, Tyr-90, and Glu-95 each coordinate Ca(2+). The stretch at 190–235 forms a coiled coil; sequence IRDVHHEKDTLEQALKRKETDHGREVRCLYEEMEQQIKIERERLLK.

Belongs to the EFCAB4 family.

In Xenopus tropicalis (Western clawed frog), this protein is EF-hand calcium-binding domain-containing protein 4A (cracr2b).